Reading from the N-terminus, the 173-residue chain is Membrane protein PM19L (173 aa).

4 helical membrane-spanning segments follow: residues 9-29 (IAPLLVLNLIMYLIVIGFASW), 43-63 (GVAGNGATFYFLVFAILAGVV), 83-103 (LAAGAASALIAWAITALAFGL), and 124-144 (FVIILAFTQLLYVAMLHGGLF).

Expressed in roots, leaf blades, leaf sheaths, stems, spikelets and embryos.

The protein resides in the membrane. Functionally, may be involved in abiotic stress response through abscisic acid-dependent signaling. In Oryza sativa subsp. japonica (Rice), this protein is Membrane protein PM19L.